A 176-amino-acid chain; its full sequence is Small ribosomal subunit protein uS5 (176 aa).

The S5 DRBM domain maps to 11 to 74; that stretch reads LSEVLVDVNR…QAAKKRMMKV (64 aa).

The protein belongs to the universal ribosomal protein uS5 family. Part of the 30S ribosomal subunit. Contacts proteins S4 and S8.

Its function is as follows. With S4 and S12 plays an important role in translational accuracy. Located at the back of the 30S subunit body where it stabilizes the conformation of the head with respect to the body. This chain is Small ribosomal subunit protein uS5, found in Rickettsia massiliae (strain Mtu5).